We begin with the raw amino-acid sequence, 231 residues long: Endonuclease NucS (231 aa).

This sequence belongs to the NucS endonuclease family.

The protein localises to the cytoplasm. Its function is as follows. Cleaves both 3' and 5' ssDNA extremities of branched DNA structures. The chain is Endonuclease NucS from Pseudarthrobacter chlorophenolicus (strain ATCC 700700 / DSM 12829 / CIP 107037 / JCM 12360 / KCTC 9906 / NCIMB 13794 / A6) (Arthrobacter chlorophenolicus).